Consider the following 300-residue polypeptide: GTPase Era (300 aa).

The Era-type G domain occupies 4 to 173; that stretch reads KYGIVAIVGK…INTIKQYLHK (170 aa). Positions 12 to 19 are G1; sequence GKPNVGKS. A GTP-binding site is contributed by 12–19; that stretch reads GKPNVGKS. The G2 stretch occupies residues 38 to 42; the sequence is QTTRN. Residues 59–62 are G3; the sequence is DTPG. GTP-binding positions include 59 to 63 and 122 to 125; these read DTPGF and SKAE. The tract at residues 122-125 is G4; the sequence is SKAE. Residues 152–154 are G5; that stretch reads ISA. In terms of domain architecture, KH type-2 spans 204–282; that stretch reads LNHEVPHGVG…SLTIFVKVEN (79 aa).

Belongs to the TRAFAC class TrmE-Era-EngA-EngB-Septin-like GTPase superfamily. Era GTPase family. Monomer.

The protein localises to the cytoplasm. Its subcellular location is the cell membrane. In terms of biological role, an essential GTPase that binds both GDP and GTP, with rapid nucleotide exchange. Plays a role in 16S rRNA processing and 30S ribosomal subunit biogenesis and possibly also in cell cycle regulation and energy metabolism. This chain is GTPase Era, found in Ureaplasma urealyticum serovar 10 (strain ATCC 33699 / Western).